We begin with the raw amino-acid sequence, 29 residues long: Trypsin inhibitor 5 (29 aa).

Intrachain disulfides connect Cys-3–Cys-20, Cys-10–Cys-22, and Cys-16–Cys-28.

Belongs to the protease inhibitor I7 (squash-type serine protease inhibitor) family.

It localises to the secreted. Functionally, strongly inhibits trypsin, weakly inhibits chymotrypsin. The protein is Trypsin inhibitor 5 of Cyclanthera pedata (Achocha).